A 102-amino-acid chain; its full sequence is Circadian clock protein KaiB3 (102 aa).

It belongs to the KaiB family. In terms of assembly, purifies as a monomer and homotetramer. Interacts with KaiC1 and KaiC3.

Functionally, a paralog of KaiB1, the major clock oscillator protein in this species. KaiB3 and KaiC3 may cross talk with the core oscillator. The monomer reduces the ATPase activity of KaiC3 by 55%, the homotetramer has no effect. Its function is as follows. A metamorphic protein which may reversibly switch between an inactive tetrameric fold and a rare thioredoxin-like monomeric fold (KaiB(fs)). This is Circadian clock protein KaiB3 from Synechocystis sp. (strain ATCC 27184 / PCC 6803 / Kazusa).